The primary structure comprises 115 residues: U3-lycotoxin-Ls1j (115 aa).

The first 20 residues, 1–20, serve as a signal peptide directing secretion; that stretch reads MKFVLLFGVFLVTLFSYSSA. The propeptide occupies 21–44; it reads EMLDDFDQADEDELLSLIEKEEAR. Disulfide bonds link Cys48-Cys63, Cys55-Cys72, Cys62-Cys87, and Cys74-Cys85.

Belongs to the neurotoxin 19 (CSTX) family. 01 subfamily. Expressed by the venom gland.

Its subcellular location is the secreted. This chain is U3-lycotoxin-Ls1j, found in Lycosa singoriensis (Wolf spider).